Consider the following 620-residue polypeptide: Translation initiation factor IF-2 (620 aa).

The tr-type G domain maps to 119 to 288 (ERPPIVTIMG…IILISELENL (170 aa)). The tract at residues 128–135 (GHVDHGKT) is G1. 128-135 (GHVDHGKT) contributes to the GTP binding site. The interval 153–157 (GITQA) is G2. The tract at residues 175–178 (DTPG) is G3. GTP is bound by residues 175–179 (DTPGH) and 229–232 (NKID). Positions 229 to 232 (NKID) are G4. The tract at residues 265–267 (SAI) is G5.

Belongs to the TRAFAC class translation factor GTPase superfamily. Classic translation factor GTPase family. IF-2 subfamily.

The protein resides in the cytoplasm. One of the essential components for the initiation of protein synthesis. Protects formylmethionyl-tRNA from spontaneous hydrolysis and promotes its binding to the 30S ribosomal subunits. Also involved in the hydrolysis of GTP during the formation of the 70S ribosomal complex. The polypeptide is Translation initiation factor IF-2 (Mycoplasma capricolum subsp. capricolum (strain California kid / ATCC 27343 / NCTC 10154)).